The primary structure comprises 1843 residues: Nonribosomal peptide synthetase SIDD (1843 aa).

The disordered stretch occupies residues Met1–Ser83. Residues Gln65 to Gln81 are compositionally biased toward low complexity. The tract at residues Thr133–Cys528 is adenylation 1. A disordered region spans residues Lys628 to Glu647. In terms of domain architecture, Carrier 1 spans Glu641–Ser716. Ser677 is modified (O-(pantetheine 4'-phosphoryl)serine). The interval Val753 to Leu1175 is condensation 1. The Carrier 2 domain maps to Ser1289–Asp1365. Position 1326 is an O-(pantetheine 4'-phosphoryl)serine (Ser1326). The segment at Phe1447–Leu1734 is condensation 2.

Belongs to the NRP synthetase family. Requires pantetheine 4'-phosphate as cofactor.

It functions in the pathway siderophore biosynthesis. Functionally, nonribosomal peptide synthetase; part of the gene cluster that mediates the biosynthesis of at least 11 siderophores, including beauverichelin A, dimerumic acid (DA), Na-dimethyl coprogen (NADC), eleutherazine B, ferricrocin (FC), fusarinine A, fusarinine C (FsC), metachelin A, mevalonolactone, rhodotorulic acid (RA) and tenellin. This cocktail of siderophores for iron metabolism is essential for virulence, and more specifically for the fungal virulence in penetrating through the host cuticle. Siderophore synthesis is also involved in conidial germination under iron-deficient conditions. SIDC catalyzes the assembly of ferricrocin whereas SIDD catalyzes the assembly of fusarinine C. This chain is Nonribosomal peptide synthetase SIDD, found in Beauveria bassiana (strain ARSEF 2860) (White muscardine disease fungus).